We begin with the raw amino-acid sequence, 485 residues long: Glutamyl-tRNA(Gln) amidotransferase subunit A (485 aa).

Catalysis depends on charge relay system residues Lys-79 and Ser-154. Catalysis depends on Ser-178, which acts as the Acyl-ester intermediate.

This sequence belongs to the amidase family. GatA subfamily. Heterotrimer of A, B and C subunits.

The catalysed reaction is L-glutamyl-tRNA(Gln) + L-glutamine + ATP + H2O = L-glutaminyl-tRNA(Gln) + L-glutamate + ADP + phosphate + H(+). Allows the formation of correctly charged Gln-tRNA(Gln) through the transamidation of misacylated Glu-tRNA(Gln) in organisms which lack glutaminyl-tRNA synthetase. The reaction takes place in the presence of glutamine and ATP through an activated gamma-phospho-Glu-tRNA(Gln). The sequence is that of Glutamyl-tRNA(Gln) amidotransferase subunit A from Clostridium botulinum (strain Okra / Type B1).